The chain runs to 506 residues: Maturase K (506 aa).

Belongs to the intron maturase 2 family. MatK subfamily.

It is found in the plastid. It localises to the chloroplast. Functionally, usually encoded in the trnK tRNA gene intron. Probably assists in splicing its own and other chloroplast group II introns. The polypeptide is Maturase K (Hydrangea macrophylla (Bigleaf hydrangea)).